The following is a 190-amino-acid chain: Lipid A acyltransferase PagP (190 aa).

An N-terminal signal peptide occupies residues 1 to 24; that stretch reads MNRYLLTTLSAPLLALFFSFSLQA. Residues His62, Asp105, and Ser106 contribute to the active site.

It belongs to the lipid A palmitoyltransferase family. Homodimer.

The protein localises to the cell outer membrane. The catalysed reaction is a lipid A + a 1,2-diacyl-sn-glycero-3-phosphocholine = a hepta-acyl lipid A + a 2-acyl-sn-glycero-3-phosphocholine. The enzyme catalyses a lipid IVA + a 1,2-diacyl-sn-glycero-3-phosphocholine = a lipid IVB + a 2-acyl-sn-glycero-3-phosphocholine. It carries out the reaction a lipid IIA + a 1,2-diacyl-sn-glycero-3-phosphocholine = a lipid IIB + a 2-acyl-sn-glycero-3-phosphocholine. In terms of biological role, transfers a fatty acid residue from the sn-1 position of a phospholipid to the N-linked hydroxyfatty acid chain on the proximal unit of lipid A or its precursors. This is Lipid A acyltransferase PagP from Pantoea ananatis (strain LMG 20103).